A 489-amino-acid polypeptide reads, in one-letter code: Betaine aldehyde dehydrogenase (489 aa).

T26 and D93 together coordinate K(+). NAD(+) is bound at residue G150–W152. Catalysis depends on K162, which acts as the Charge relay system. Residue K176–E179 participates in NAD(+) binding. V180 provides a ligand contact to K(+). An NAD(+)-binding site is contributed by G229–T232. L245 is a binding site for K(+). The Proton acceptor role is filled by E251. The NAD(+) site is built by G253, C285, and E386. C285 functions as the Nucleophile in the catalytic mechanism. C285 carries the cysteine sulfenic acid (-SOH) modification. K(+) contacts are provided by K456 and G459. Catalysis depends on E463, which acts as the Charge relay system.

Belongs to the aldehyde dehydrogenase family. In terms of assembly, dimer of dimers. K(+) serves as cofactor.

The catalysed reaction is betaine aldehyde + NAD(+) + H2O = glycine betaine + NADH + 2 H(+). It participates in amine and polyamine biosynthesis; betaine biosynthesis via choline pathway; betaine from betaine aldehyde: step 1/1. In terms of biological role, involved in the biosynthesis of the osmoprotectant glycine betaine. Catalyzes the irreversible oxidation of betaine aldehyde to the corresponding acid. The sequence is that of Betaine aldehyde dehydrogenase from Burkholderia pseudomallei (strain K96243).